The primary structure comprises 463 residues: uncharacterized protein (463 aa).

In terms of domain architecture, HTH gntR-type spans 13–81 (IPLYQQLYRY…PRSGWFADYH (69 aa)). A DNA-binding region (H-T-H motif) is located at residues 41–60 (KRLLANQLSISQTTVERAYE). An N6-(pyridoxal phosphate)lysine modification is found at K308.

In the C-terminal section; belongs to the class-I pyridoxal-phosphate-dependent aminotransferase family. Pyridoxal 5'-phosphate serves as cofactor.

This is an uncharacterized protein from Bacillus subtilis (strain 168).